The primary structure comprises 253 residues: 2-dehydro-3-deoxy-D-gluconate 5-dehydrogenase (253 aa).

14 to 38 (LITGCDTGLGQGMAVGLAEAGCDIV) contributes to the NAD(+) binding site. Serine 145 contacts substrate. Tyrosine 158 acts as the Proton acceptor in catalysis.

Belongs to the short-chain dehydrogenases/reductases (SDR) family.

The enzyme catalyses 2-dehydro-3-deoxy-D-gluconate + NAD(+) = 3-deoxy-D-glycero-2,5-hexodiulosonate + NADH + H(+). The protein operates within glycan metabolism; pectin degradation; 2-dehydro-3-deoxy-D-gluconate from pectin: step 5/5. In terms of biological role, catalyzes the reduction of 2,5-diketo-3-deoxygluconate (DKII or 4,6-dihydroxy-2,5-dioxohexanoate) into 2-keto-3-deoxygluconate (KDG or 2-dehydro-3-deoxygluconate) with a concomitant oxidation of NADH. The chain is 2-dehydro-3-deoxy-D-gluconate 5-dehydrogenase (kduD) from Dickeya dadantii (strain 3937) (Erwinia chrysanthemi (strain 3937)).